The sequence spans 443 residues: MSEMTPREIVSELDKHIIGQDNAKRSVAIALRNRWRRMQLNEELRHEVTPKNILMIGPTGVGKTEIARRLAKLANAPFIKVEATKFTEVGYVGKEVDSIIRDLTDAAVKMVRVQAIEKNRYRAEELAEERILDVLIPPAKNNWGQTEQQQEPSAARQAFRKKLREGQLDDKEIEIDLAAAPMGVEIMAPPGMEEMTSQLQSMFQNLGGQKQKARKLKIKDAMKLLIEEEAAKLVNPEELKQDAIDAVEQHGIVFIDEIDKICKRGESSGPDVSREGVQRDLLPLVEGCTVSTKHGMVKTDHILFIASGAFQIAKPSDLIPELQGRLPIRVELQALTTSDFERILTEPNASITVQYKALMATEGVNIEFTDSGIKRIAEAAWQVNESTENIGARRLHTVLERLMEEISYDASDLSGQTIIIDADYVSKHLDALVADEDLSRFIL.

Residues Ile-18, 60-65, Asp-256, Glu-321, and Arg-393 each bind ATP; that span reads GVGKTE.

Belongs to the ClpX chaperone family. HslU subfamily. In terms of assembly, a double ring-shaped homohexamer of HslV is capped on each side by a ring-shaped HslU homohexamer. The assembly of the HslU/HslV complex is dependent on binding of ATP.

It localises to the cytoplasm. Its function is as follows. ATPase subunit of a proteasome-like degradation complex; this subunit has chaperone activity. The binding of ATP and its subsequent hydrolysis by HslU are essential for unfolding of protein substrates subsequently hydrolyzed by HslV. HslU recognizes the N-terminal part of its protein substrates and unfolds these before they are guided to HslV for hydrolysis. This chain is ATP-dependent protease ATPase subunit HslU, found in Escherichia coli O139:H28 (strain E24377A / ETEC).